The following is a 390-amino-acid chain: Putative nickel insertion protein (390 aa).

The protein belongs to the LarC family.

This chain is Putative nickel insertion protein, found in Geotalea uraniireducens (strain Rf4) (Geobacter uraniireducens).